Consider the following 1300-residue polypeptide: uncharacterized protein (1300 aa).

Residues Met-1–Tyr-1205 are disordered. The span at Gly-51 to Lys-69 shows a compositional bias: basic residues. Residues Glu-73–Gly-143 are compositionally biased toward gly residues. The span at Ser-145–Thr-165 shows a compositional bias: basic residues. Positions Pro-237 to Pro-246 are enriched in low complexity. The segment covering Glu-250–Glu-270 has biased composition (acidic residues). Residues Pro-280–Pro-289 are compositionally biased toward low complexity. 2 stretches are compositionally biased toward acidic residues: residues Pro-295–Asp-343 and Pro-357–Ser-417. Residues Pro-418–Pro-427 are compositionally biased toward low complexity. Acidic residues-rich tracts occupy residues Glu-431–Glu-469, Pro-477–Glu-494, Glu-517–Glu-558, and Glu-581–Ser-630. Gly residues predominate over residues Ser-674–Gly-686. Composition is skewed to acidic residues over residues Pro-713–Glu-726, Pro-736–Glu-749, Pro-759–Glu-772, and Ser-820–Val-883. Positions Gly-903 to Glu-917 are enriched in basic and acidic residues. Composition is skewed to gly residues over residues Gly-922–Gly-1010 and Gly-1021–Gly-1031. Over residues Arg-1183–Gln-1195 the composition is skewed to basic residues.

This is an uncharacterized protein from Connochaetes taurinus (Blue wildebeest).